The sequence spans 198 residues: Large ribosomal subunit protein bL25 (198 aa).

The protein belongs to the bacterial ribosomal protein bL25 family. CTC subfamily. As to quaternary structure, part of the 50S ribosomal subunit; part of the 5S rRNA/L5/L18/L25 subcomplex. Contacts the 5S rRNA. Binds to the 5S rRNA independently of L5 and L18.

Functionally, this is one of the proteins that binds to the 5S RNA in the ribosome where it forms part of the central protuberance. The polypeptide is Large ribosomal subunit protein bL25 (Gloeothece citriformis (strain PCC 7424) (Cyanothece sp. (strain PCC 7424))).